Here is a 1742-residue protein sequence, read N- to C-terminus: Complement C4 (1742 aa).

An N-terminal signal peptide occupies residues 1–19 (MRLLWGLLWAFGLFASSLQ). A glycan (N-linked (GlcNAc...) asparagine) is linked at N60. C68 and C97 are oxidised to a cystine. The N-linked (GlcNAc...) asparagine glycan is linked to N226. Residues C634 and C668 are joined by a disulfide bond. A propeptide spanning residues 675–678 (RKKR) is cleaved from the precursor. Cystine bridges form between C701-C727, C702-C734, and C715-C735. The Anaphylatoxin-like domain maps to 701–735 (CCQDGLTRLPMVRSCEQRAARVLQPACREPFLSCC). N861 carries N-linked (GlcNAc...) asparagine glycosylation. Residues 1007-1010 (CGEQ) constitute a cross-link (isoglutamyl cysteine thioester (Cys-Gln)). Residues N1325 and N1388 are each glycosylated (N-linked (GlcNAc...) asparagine). Residues Y1414, Y1418, and Y1420 each carry the sulfotyrosine modification. The propeptide occupies 1445-1451 (RRNRRRR). Disulfide bonds link C1469/C1533, C1581/C1586, C1593/C1671, C1616/C1740, and C1716/C1725. Residues 1593–1740 (CPRQRRALER…FIQEYSTLGC (148 aa)) enclose the NTR domain.

In terms of assembly, in absence of complement activation, circulates in blood as a disulfide-linked trimer of an alpha, beta and gamma chain. As to quaternary structure, complement C4b is composed of complement C4b-A, complement C4 beta and complement C4 gamma chains that are associated via disulfide bonds. Non-enzymatic component of the C3 convertase, also named C4bC2b, composed of the serine protease complement C2b (C2), as well as complement C4b. Non-enzymatic component of the C5 convertase, also named C4bC2bC3b, composed of the serine protease complement C2b (C2), complement C3b, as well as complement C4b. In terms of processing, prior to secretion, the single-chain precursor is enzymatically cleaved by plasminogen (PLG) to yield non-identical chains alpha, beta and gamma. During activation of the complement systems, the alpha chain is cleaved into C4a and C4b by different proteases depending on the complement pathway: C4b stays linked to the beta and gamma chains, while C4a is released in the plasma. The alpha chain is cleaved by C1S to generate C4a and C4b following activation by the classical complement system. The alpha chain is cleaved to generate C4a and C4b by MASP2 following activation by the lectin complement system. The alpha chain is cleaved by GZMK to generate C4a and C4b following activation by the GZMK complement system. Further degradation of C4b by C1 into the inactive fragments C4c and C4d blocks the generation of C3 convertase. The proteolytic cleavages often are incomplete so that many structural forms can be found in plasma. Upon activation, the internal thioester bond reacts with carbohydrate antigens on the target surface to form amide or ester bonds, leading to covalent association with the surface of pathogens. Post-translationally, complement C4b interacts with complement C3b via a thioester linkage. In terms of processing, N- and O-glycosylated. O-glycosylated with a core 1 or possibly core 8 glycan.

It is found in the secreted. It localises to the cell surface. Its function is as follows. Precursor of non-enzymatic components of the classical, lectin and GZMK complement pathways, which consist in a cascade of proteins that leads to phagocytosis and breakdown of pathogens and signaling that strengthens the adaptive immune system. Functionally, non-enzymatic component of C3 and C5 convertases. Generated following cleavage by complement proteases (C1S, MASP2 or GZMK, depending on the complement pathway), it covalently attaches to the surface of pathogens, where it acts as an opsonin that marks the surface of antigens for removal. It then recruits the serine protease complement C2b to form the C3 and C5 convertases, which cleave and activate C3 and C5, respectively, the next components of the complement pathways. Complement C4b-A isotype is responsible for effective binding to form amide bonds with immune aggregates or protein antigens, while complement C4b-B isotype catalyzes the transacylation of the thioester carbonyl group to form ester bonds with carbohydrate antigens. In terms of biological role, putative humoral mediator released following cleavage by complement proteases (C1S, MASP2 or GZMK, depending on the complement pathway). While it is strongly similar to anaphylatoxins, its role is unclear. Was reported to act as a mediator of local inflammatory process; however these effects were probably due to contamination with C3a and/C5a anaphylatoxins in biological assays. The sequence is that of Complement C4 from Cavia porcellus (Guinea pig).